The following is a 227-amino-acid chain: Lipoprotein-releasing system ATP-binding protein LolD (227 aa).

The ABC transporter domain maps to 6–227 (LKIEGLRKTY…HLEDGVLVER (222 aa)). 43-50 (APSGAGKS) provides a ligand contact to ATP.

This sequence belongs to the ABC transporter superfamily. Lipoprotein translocase (TC 3.A.1.125) family. In terms of assembly, the complex is composed of two ATP-binding proteins (LolD) and two transmembrane proteins (LolC and LolE).

Its subcellular location is the cell inner membrane. Its function is as follows. Part of the ABC transporter complex LolCDE involved in the translocation of mature outer membrane-directed lipoproteins, from the inner membrane to the periplasmic chaperone, LolA. Responsible for the formation of the LolA-lipoprotein complex in an ATP-dependent manner. This Ruegeria sp. (strain TM1040) (Silicibacter sp.) protein is Lipoprotein-releasing system ATP-binding protein LolD.